The primary structure comprises 1580 residues: Transcriptional activator GLI3 (1580 aa).

Met1 is modified (N-acetylmethionine). Composition is skewed to polar residues over residues 1–10 (MEAQSHSSTT) and 58–78 (ITMQPQNVQGLSKVSEEPSTS). A disordered region spans residues 1–79 (MEAQSHSSTT…KVSEEPSTSS (79 aa)). Omega-N-methylarginine is present on Arg175. Residues 368–475 (QSLGSAFGHS…DKDESKQEPE (108 aa)) are disordered. Positions 401–427 (NPVQVSSGPSESSQNKPTSESAVSSTG) are enriched in polar residues. Glycyl lysine isopeptide (Lys-Gly) (interchain with G-Cter in SUMO2) cross-links involve residues Lys438 and Lys462. Residues 461–474 (VKEEGDKDESKQEP) are compositionally biased toward basic and acidic residues. 5 C2H2-type zinc fingers span residues 480–505 (TNCHWEGCAREFDTQEQLVHHINNDH), 513–540 (FVCRWLDCSREQKPFKAQYMLVVHMRRH), 546–570 (HKCTFEGCTKAYSRLENLKTHLRSH), 576–601 (YVCEHEGCNKAFSNASDRAKHQNRTH), and 607–632 (YVCKIPGCTKRYTDPSSLRKHVKTVH). The segment at 620–728 (DPSSLRKHVK…PISNYSNSGL (109 aa)) is disordered. Residues 632–648 (HGPEAHVTKKQRGDIHP) show a composition bias toward basic and acidic residues. Position 664 is a phosphoserine (Ser664). A compositionally biased stretch (basic and acidic residues) spans 684-699 (SKREECLQVKTVKAEK). Residues 703–726 (SQPSPGGQSSCSSQQSPISNYSNS) are compositionally biased toward low complexity. The segment at 745–845 (DETPIMDSTI…VDVTMLNMLN (101 aa)) is mediates interaction with DZIP1. Residue Lys773 forms a Glycyl lysine isopeptide (Lys-Gly) (interchain with G-Cter in ubiquitin) linkage. A Glycyl lysine isopeptide (Lys-Gly) (interchain with G-Cter in SUMO2); alternate cross-link involves residue Lys779. Lys779 participates in a covalent cross-link: Glycyl lysine isopeptide (Lys-Gly) (interchain with G-Cter in ubiquitin); alternate. Glycyl lysine isopeptide (Lys-Gly) (interchain with G-Cter in ubiquitin) cross-links involve residues Lys784 and Lys800. 4 positions are modified to phosphoserine; by PKA: Ser849, Ser865, Ser877, and Ser907. Residues 863-882 (RSSGISPCFSSRRSSEASQA) are compositionally biased toward low complexity. The tract at residues 863–918 (RSSGISPCFSSRRSSEASQAEGRPQNVSVADSYDPISTDASRRSSEASQSDGLPSL) is disordered. Over residues 908-918 (EASQSDGLPSL) the composition is skewed to polar residues. 2 positions are modified to phosphoserine; by PKA: Ser980 and Ser1006. The segment at 981 to 1042 (DGGAHGYGRR…PAMATSAEKR (62 aa)) is disordered.

It belongs to the GLI C2H2-type zinc-finger protein family. As to quaternary structure, the full-length GLI3 form (GLI3FL) interacts with SUFU and this interaction regulates the formation of either repressor or activator forms of GLI3. Its association with SUFU is regulated by Hh signaling and dissociation of the SUFU-GLI3 interaction requires the presence of the ciliary motor KIF3A. Interacts with KIF7. The activator form of GLI3 (GLI3A) but not the repressor form (GLI3R) can interact with TRPS1. The phosphorylated form interacts with BTRC. Interacts with ZIC1. Interacts with ZIC3 (via C2H2-type domains 3, 4 and 5); the interaction enhances its transcriptional activity. Interacts with WRD11; the interaction associates EMX1 with GLI3. Interacts with DZIP1; retains GLI3 within the cytoplasm. Phosphorylated on multiple sites by protein kinase A (PKA) and phosphorylation by PKA primes further phosphorylation by CK1 and GSK3. Phosphorylated by DYRK2 (in vitro). Phosphorylation is essential for its proteolytic processing. Post-translationally, transcriptional repressor GLI3R, a C-terminally truncated form, is generated from the full-length GLI3 protein (GLI3FL/GLI3-190) through proteolytic processing. This process requires PKA-primed phosphorylation of GLI3, ubiquitination of GLI3 and the presence of BTRC. GLI3FL is complexed with SUFU in the cytoplasm and is maintained in a neutral state. Without the Hh signal, the SUFU-GLI3 complex is recruited to cilia, leading to the efficient processing of GLI3FL into GLI3R. GLI3R formation leads to its dissociation from SUFU, allowing it to translocate into the nucleus, and repress Hh target genes. When Hh signaling is initiated, SUFU dissociates from GLI3FL and this has two consequences. First, GLI3R production is halted. Second, free GLI3FL translocates to the nucleus, where it is phosphorylated, destabilized, and converted to a transcriptional activator (GLI3A). Phosphorylated in vitro by ULK3. As to expression, is expressed in a wide variety of normal adult tissues, including lung, colon, spleen, placenta, testis, and myometrium.

It localises to the nucleus. It is found in the cytoplasm. The protein localises to the cell projection. Its subcellular location is the cilium. Its function is as follows. Has a dual function as a transcriptional activator and a repressor of the sonic hedgehog (Shh) pathway, and plays a role in limb development. The full-length GLI3 form (GLI3FL) after phosphorylation and nuclear translocation, acts as an activator (GLI3A) while GLI3R, its C-terminally truncated form, acts as a repressor. A proper balance between the GLI3 activator and the repressor GLI3R, rather than the repressor gradient itself or the activator/repressor ratio gradient, specifies limb digit number and identity. In concert with TRPS1, plays a role in regulating the size of the zone of distal chondrocytes, in restricting the zone of PTHLH expression in distal cells and in activating chondrocyte proliferation. Binds to the minimal GLI-consensus sequence 5'-GGGTGGTC-3'. This chain is Transcriptional activator GLI3 (GLI3), found in Homo sapiens (Human).